The sequence spans 461 residues: Phosphoglycerate kinase, chloroplastic (461 aa).

The transit peptide at 1–60 (MALSMKMRANARVSGRRVAAVAPRVVPFSSASSSVLRSGFALRCLWTSAAWAALASVVEA) directs the protein to the chloroplast. 11 residues coordinate (2R)-3-phosphoglycerate: A82, D83, N85, R100, S122, H123, G125, R126, R182, H214, and R215. Residue G260 participates in ADP binding. CDP is bound at residue G260. Residues K262 and K266 each coordinate AMP. K266 provides a ligand contact to ATP. ADP is bound at residue G284. G284 lines the CDP pocket. G285 and G357 together coordinate AMP. ATP is bound by residues G285 and G357. CDP-binding residues include G382 and F387. An ADP-binding site is contributed by F387. AMP is bound at residue E388. ATP-binding residues include E388, D419, and S420. A Mg(2+)-binding site is contributed by D419.

Belongs to the phosphoglycerate kinase family. In terms of assembly, monomer. The cofactor is Mg(2+).

The protein resides in the plastid. It localises to the chloroplast. It catalyses the reaction (2R)-3-phosphoglycerate + ATP = (2R)-3-phospho-glyceroyl phosphate + ADP. The protein operates within carbohydrate biosynthesis; Calvin cycle. The polypeptide is Phosphoglycerate kinase, chloroplastic (Chlamydomonas reinhardtii (Chlamydomonas smithii)).